Consider the following 549-residue polypeptide: Glucose-6-phosphate isomerase (549 aa).

Residues Lys80, Lys228, and Lys234 each carry the N6-acetyllysine modification. Glu355 functions as the Proton donor in the catalytic mechanism. Active-site residues include His386 and Lys514.

It belongs to the GPI family.

The protein localises to the cytoplasm. The catalysed reaction is alpha-D-glucose 6-phosphate = beta-D-fructose 6-phosphate. The protein operates within carbohydrate biosynthesis; gluconeogenesis. Its pathway is carbohydrate degradation; glycolysis; D-glyceraldehyde 3-phosphate and glycerone phosphate from D-glucose: step 2/4. Its function is as follows. Catalyzes the reversible isomerization of glucose-6-phosphate to fructose-6-phosphate. This is Glucose-6-phosphate isomerase from Escherichia coli O17:K52:H18 (strain UMN026 / ExPEC).